The sequence spans 525 residues: Protein disulfide-isomerase A2 (525 aa).

Positions Met1–Gly21 are cleaved as a signal peptide. The 126-residue stretch at Arg27–Gly152 folds into the Thioredoxin 1 domain. Catalysis depends on nucleophile residues Cys71 and Cys74. Residues Cys71 and Cys74 are joined by a disulfide bond. Asn127 and Asn284 each carry an N-linked (GlcNAc...) asparagine glycan. The Thioredoxin 2 domain maps to Val367 to Val496. Active-site nucleophile residues include Cys418 and Cys421. The cysteines at positions 418 and 421 are disulfide-linked. The tract at residues Pro498 to Leu525 is disordered. Asn516 carries an N-linked (GlcNAc...) asparagine glycan. Polar residues predominate over residues Asn516–Leu525. A Prevents secretion from ER motif is present at residues Lys522–Leu525.

The protein belongs to the protein disulfide isomerase family. Monomer; predominantly as monomer under reducing conditions. Homodimer; disulfide-linked. Part of a large chaperone multiprotein complex comprising DNAJB11, HSP90B1, HSPA5, HYOU, PDIA2, PDIA4, PDIA6, PPIB, SDF2L1, UGGT1 and very small amounts of ERP29, but not, or at very low levels, CALR nor CANX. The disulfide-linked homodimer exhibits an enhanced chaperone activity. In terms of processing, glycosylated.

The protein localises to the endoplasmic reticulum lumen. The enzyme catalyses Catalyzes the rearrangement of -S-S- bonds in proteins.. Acts as an intracellular estrogen-binding protein. May be involved in modulating cellular levels and biological functions of estrogens in the pancreas. May act as a chaperone that inhibits aggregation of misfolded proteins. This is Protein disulfide-isomerase A2 (PDIA2) from Pongo abelii (Sumatran orangutan).